A 553-amino-acid polypeptide reads, in one-letter code: Phenylalanine--tRNA ligase alpha subunit (553 aa).

Residues Thr400 and Phe479 each coordinate L-phenylalanine. Mg(2+) is bound at residue Glu481.

Belongs to the class-II aminoacyl-tRNA synthetase family. Phe-tRNA synthetase alpha subunit type 2 subfamily. Tetramer of two alpha and two beta subunits. Requires Mg(2+) as cofactor.

It localises to the cytoplasm. It catalyses the reaction tRNA(Phe) + L-phenylalanine + ATP = L-phenylalanyl-tRNA(Phe) + AMP + diphosphate + H(+). In Treponema pallidum (strain Nichols), this protein is Phenylalanine--tRNA ligase alpha subunit.